Consider the following 40-residue polypeptide: Antimicrobial peptide 1 (40 aa).

A Chitin-binding type-1 domain is found at 1 to 40 (AQCGAQGGGATCPGGLCCSQWGWCGSTPKYCGAGCQSNCK). Cystine bridges form between Cys3-Cys18, Cys12-Cys24, Cys17-Cys31, and Cys35-Cys39.

Not glycosylated.

Antimicrobial peptide active against plant pathogenic fungi and Gram-negative and -positive bacteria. This is Antimicrobial peptide 1 from Fagopyrum esculentum (Common buckwheat).